A 100-amino-acid polypeptide reads, in one-letter code: Transcription and mRNA export factor SUS1 (100 aa).

This sequence belongs to the ENY2 family. As to quaternary structure, component of the nuclear pore complex (NPC)-associated TREX-2 complex (transcription and export complex 2), composed of at least SUS1, SAC3, THP1, SEM1, and CDC31. TREX-2 contains 2 SUS1 chains. The TREX-2 complex interacts with the nucleoporin NUP1. Component of the 1.8 MDa SAGA transcription coactivator-HAT complex. SAGA is built of 5 distinct domains with specialized functions. Within the SAGA complex, SUS1, SGF11, SGF73 and UBP8 form an additional subcomplex of SAGA called the DUB module (deubiquitination module). Interacts directly with THP1, SAC3, SGF11, and with the RNA polymerase II.

The protein resides in the nucleus. It is found in the nucleoplasm. Its subcellular location is the cytoplasm. The protein localises to the P-body. Its function is as follows. Involved in mRNA export coupled transcription activation by association with both the TREX-2 and the SAGA complexes. At the promoters, SAGA is required for recruitment of the basal transcription machinery. It influences RNA polymerase II transcriptional activity through different activities such as TBP interaction and promoter selectivity, interaction with transcription activators, and chromatin modification through histone acetylation and deubiquitination. Within the SAGA complex, participates in a subcomplex required for deubiquitination of H2B and for the maintenance of steady-state H3 methylation levels. The TREX-2 complex functions in docking export-competent ribonucleoprotein particles (mRNPs) to the nuclear entrance of the nuclear pore complex (nuclear basket). TREX-2 participates in mRNA export and accurate chromatin positioning in the nucleus by tethering genes to the nuclear periphery. May also be involved in cytoplasmic mRNA decay by interaction with components of P-bodies. This Cryptococcus neoformans var. neoformans serotype D (strain B-3501A) (Filobasidiella neoformans) protein is Transcription and mRNA export factor SUS1.